A 400-amino-acid chain; its full sequence is Ribosomal RNA large subunit methyltransferase I (400 aa).

Residues 6 to 84 (FPRLVLAKGR…NEAIDSAFFE (79 aa)) form the PUA domain.

Belongs to the methyltransferase superfamily. RlmI family.

The protein resides in the cytoplasm. It carries out the reaction cytidine(1962) in 23S rRNA + S-adenosyl-L-methionine = 5-methylcytidine(1962) in 23S rRNA + S-adenosyl-L-homocysteine + H(+). Its function is as follows. Specifically methylates the cytosine at position 1962 (m5C1962) of 23S rRNA. The sequence is that of Ribosomal RNA large subunit methyltransferase I from Klebsiella pneumoniae (strain 342).